The following is a 175-amino-acid chain: Sec-independent protein translocase protein TatB (175 aa).

A helical transmembrane segment spans residues 1-21 (MLDLGLSKMALIGVVALVVLG). A disordered region spans residues 155–175 (SGAARVARHQPASLRRPTRFF).

The protein belongs to the TatB family. In terms of assembly, the Tat system comprises two distinct complexes: a TatABC complex, containing multiple copies of TatA, TatB and TatC subunits, and a separate TatA complex, containing only TatA subunits. Substrates initially bind to the TatABC complex, which probably triggers association of the separate TatA complex to form the active translocon.

The protein resides in the cell inner membrane. Functionally, part of the twin-arginine translocation (Tat) system that transports large folded proteins containing a characteristic twin-arginine motif in their signal peptide across membranes. Together with TatC, TatB is part of a receptor directly interacting with Tat signal peptides. TatB may form an oligomeric binding site that transiently accommodates folded Tat precursor proteins before their translocation. The chain is Sec-independent protein translocase protein TatB from Burkholderia lata (strain ATCC 17760 / DSM 23089 / LMG 22485 / NCIMB 9086 / R18194 / 383).